We begin with the raw amino-acid sequence, 889 residues long: Alanine--tRNA ligase (889 aa).

Zn(2+)-binding residues include H587, H591, C691, and H695. 2 disordered regions span residues 734-760 (QQEQ…EENK) and 866-889 (AQGG…MILG). Positions 872-881 (DTSKKDEAIS) are enriched in basic and acidic residues.

The protein belongs to the class-II aminoacyl-tRNA synthetase family. Requires Zn(2+) as cofactor.

Its subcellular location is the cytoplasm. The catalysed reaction is tRNA(Ala) + L-alanine + ATP = L-alanyl-tRNA(Ala) + AMP + diphosphate. In terms of biological role, catalyzes the attachment of alanine to tRNA(Ala) in a two-step reaction: alanine is first activated by ATP to form Ala-AMP and then transferred to the acceptor end of tRNA(Ala). Also edits incorrectly charged Ser-tRNA(Ala) and Gly-tRNA(Ala) via its editing domain. This is Alanine--tRNA ligase from Nitrosopumilus maritimus (strain SCM1).